Here is a 641-residue protein sequence, read N- to C-terminus: Threonine--tRNA ligase (641 aa).

Residues 1–61 enclose the TGS domain; that stretch reads MPAITLPDGS…DDDVQLEIVT (61 aa). The interval 242–533 is catalytic; that stretch reads DHRRIGRAQN…LIEHYAGALP (292 aa). 3 residues coordinate Zn(2+): cysteine 333, histidine 384, and histidine 510.

The protein belongs to the class-II aminoacyl-tRNA synthetase family. In terms of assembly, homodimer. It depends on Zn(2+) as a cofactor.

The protein resides in the cytoplasm. The catalysed reaction is tRNA(Thr) + L-threonine + ATP = L-threonyl-tRNA(Thr) + AMP + diphosphate + H(+). Functionally, catalyzes the attachment of threonine to tRNA(Thr) in a two-step reaction: L-threonine is first activated by ATP to form Thr-AMP and then transferred to the acceptor end of tRNA(Thr). Also edits incorrectly charged L-seryl-tRNA(Thr). The sequence is that of Threonine--tRNA ligase from Alkalilimnicola ehrlichii (strain ATCC BAA-1101 / DSM 17681 / MLHE-1).